The following is a 428-amino-acid chain: Stabilizer of axonemal microtubules 4 (428 aa).

Positions 201-231 (AKEETGFTEESNKNPIVFQPPSQALPGDPVL) are disordered.

As to quaternary structure, microtubule inner protein component of sperm flagellar doublet microtubules. Interacts with PPP1CA.

The protein localises to the cell projection. The protein resides in the cilium. It is found in the cytoplasm. Its subcellular location is the cytoskeleton. It localises to the flagellum axoneme. This Bos taurus (Bovine) protein is Stabilizer of axonemal microtubules 4.